Reading from the N-terminus, the 133-residue chain is MANHDPISDMLTRIRNASEKRHQNTKVPASRMSRSIAKVLQQEGFIAEISEEGEGVHTNLVLELKYSGKHRLPTIRSMQRVSKPGLRIYKNTRGLPKVLGGLGVAIISTSKGVMSDRDARKQGVGGEVLCYVY.

Belongs to the universal ribosomal protein uS8 family. As to quaternary structure, part of the 30S ribosomal subunit. Contacts proteins S5 and S12.

In terms of biological role, one of the primary rRNA binding proteins, it binds directly to 16S rRNA central domain where it helps coordinate assembly of the platform of the 30S subunit. The sequence is that of Small ribosomal subunit protein uS8 from Synechococcus sp. (strain WH7803).